A 575-amino-acid polypeptide reads, in one-letter code: uncharacterized protein (575 aa).

The protein resides in the cytoplasm. Its subcellular location is the cytoskeleton. It localises to the microtubule organizing center. It is found in the spindle pole body. This is an uncharacterized protein from Schizosaccharomyces pombe (strain 972 / ATCC 24843) (Fission yeast).